A 371-amino-acid polypeptide reads, in one-letter code: Histidinol-phosphate aminotransferase (371 aa).

K221 bears the N6-(pyridoxal phosphate)lysine mark.

The protein belongs to the class-II pyridoxal-phosphate-dependent aminotransferase family. Histidinol-phosphate aminotransferase subfamily. As to quaternary structure, homodimer. It depends on pyridoxal 5'-phosphate as a cofactor.

The enzyme catalyses L-histidinol phosphate + 2-oxoglutarate = 3-(imidazol-4-yl)-2-oxopropyl phosphate + L-glutamate. It participates in amino-acid biosynthesis; L-histidine biosynthesis; L-histidine from 5-phospho-alpha-D-ribose 1-diphosphate: step 7/9. In Pseudoalteromonas atlantica (strain T6c / ATCC BAA-1087), this protein is Histidinol-phosphate aminotransferase.